A 117-amino-acid chain; its full sequence is Immunoglobulin heavy variable 7-4-1 (117 aa).

Positions 1 to 19 are cleaved as a signal peptide; the sequence is MDWTWRILFLVAAATGAHS. The interval 20-44 is framework-1; that stretch reads QVQLVQSGSELKKPGASVKVSCKAS. One can recognise an Ig-like domain in the interval 20–117; sequence QVQLVQSGSE…EDTAVYYCAR (98 aa). Residues cysteine 41 and cysteine 115 are joined by a disulfide bond. Residues 45 to 52 are complementarity-determining-1; that stretch reads GYTFTSYA. The framework-2 stretch occupies residues 53-69; that stretch reads MNWVRQAPGQGLEWMGW. A complementarity-determining-2 region spans residues 70-77; that stretch reads INTNTGNP. The segment at 78 to 115 is framework-3; that stretch reads TYAQGFTGRFVFSLDTSVSTAYLQICSLKAEDTAVYYC. Positions 116-117 are complementarity-determining-3; it reads AR.

As to quaternary structure, immunoglobulins are composed of two identical heavy chains and two identical light chains; disulfide-linked.

It is found in the secreted. Its subcellular location is the cell membrane. Its function is as follows. V region of the variable domain of immunoglobulin heavy chains that participates in the antigen recognition. Immunoglobulins, also known as antibodies, are membrane-bound or secreted glycoproteins produced by B lymphocytes. In the recognition phase of humoral immunity, the membrane-bound immunoglobulins serve as receptors which, upon binding of a specific antigen, trigger the clonal expansion and differentiation of B lymphocytes into immunoglobulins-secreting plasma cells. Secreted immunoglobulins mediate the effector phase of humoral immunity, which results in the elimination of bound antigens. The antigen binding site is formed by the variable domain of one heavy chain, together with that of its associated light chain. Thus, each immunoglobulin has two antigen binding sites with remarkable affinity for a particular antigen. The variable domains are assembled by a process called V-(D)-J rearrangement and can then be subjected to somatic hypermutations which, after exposure to antigen and selection, allow affinity maturation for a particular antigen. The sequence is that of Immunoglobulin heavy variable 7-4-1 from Homo sapiens (Human).